Here is a 470-residue protein sequence, read N- to C-terminus: Ribosomal protein uS12 methylthiotransferase RimO (470 aa).

The 112-residue stretch at 20–131 (PTVAFAHLGC…IVEVLQQVEA (112 aa)) folds into the MTTase N-terminal domain. Residues Cys29, Cys65, Cys94, Cys169, Cys173, and Cys176 each coordinate [4Fe-4S] cluster. The 230-residue stretch at 155 to 384 (TTGEAVAYLK…MTLQQPISAA (230 aa)) folds into the Radical SAM core domain. Positions 387 to 458 (ASWIGKTVDV…IYDLSGHVVS (72 aa)) constitute a TRAM domain.

This sequence belongs to the methylthiotransferase family. RimO subfamily. Requires [4Fe-4S] cluster as cofactor.

It is found in the cytoplasm. The enzyme catalyses L-aspartate(89)-[ribosomal protein uS12]-hydrogen + (sulfur carrier)-SH + AH2 + 2 S-adenosyl-L-methionine = 3-methylsulfanyl-L-aspartate(89)-[ribosomal protein uS12]-hydrogen + (sulfur carrier)-H + 5'-deoxyadenosine + L-methionine + A + S-adenosyl-L-homocysteine + 2 H(+). In terms of biological role, catalyzes the methylthiolation of an aspartic acid residue of ribosomal protein uS12. The polypeptide is Ribosomal protein uS12 methylthiotransferase RimO (Synechococcus sp. (strain CC9311)).